Consider the following 414-residue polypeptide: Serine--tRNA ligase (414 aa).

230–232 (TSE) contributes to the L-serine binding site. Residue 261 to 263 (RQE) coordinates ATP. Glu-284 is a binding site for L-serine. 348 to 351 (EISS) is an ATP binding site. Ser-382 contributes to the L-serine binding site.

This sequence belongs to the class-II aminoacyl-tRNA synthetase family. Type-1 seryl-tRNA synthetase subfamily. As to quaternary structure, homodimer. The tRNA molecule binds across the dimer.

Its subcellular location is the cytoplasm. It catalyses the reaction tRNA(Ser) + L-serine + ATP = L-seryl-tRNA(Ser) + AMP + diphosphate + H(+). It carries out the reaction tRNA(Sec) + L-serine + ATP = L-seryl-tRNA(Sec) + AMP + diphosphate + H(+). It participates in aminoacyl-tRNA biosynthesis; selenocysteinyl-tRNA(Sec) biosynthesis; L-seryl-tRNA(Sec) from L-serine and tRNA(Sec): step 1/1. Its function is as follows. Catalyzes the attachment of serine to tRNA(Ser). Is also able to aminoacylate tRNA(Sec) with serine, to form the misacylated tRNA L-seryl-tRNA(Sec), which will be further converted into selenocysteinyl-tRNA(Sec). The polypeptide is Serine--tRNA ligase (Campylobacter fetus subsp. fetus (strain 82-40)).